The sequence spans 217 residues: MSNVDINHARALVYQLLSSLFAREVNAQRLQELTSDAAQQFWTQLGHEPEFSAPVATMQKVLNDLQRNDALLELAADYCGLFLVGTRHSASPYASLYLNSEDEPLLFGQQHQQMSEFLHQSKLQVQSHFPEPADHLAVMLAYMGHLACHSEDAAQLNFLDACIDSWLAKFVVKVVECDSKHRNGFYSALASLTLAWVKQDKQLLEQTINSSVEQTLS.

It belongs to the TorD/DmsD family. TorD subfamily.

Its subcellular location is the cytoplasm. Involved in the biogenesis of TorA. Acts on TorA before the insertion of the molybdenum cofactor and, as a result, probably favors a conformation of the apoenzyme that is competent for acquiring the cofactor. The sequence is that of Chaperone protein TorD from Shewanella oneidensis (strain ATCC 700550 / JCM 31522 / CIP 106686 / LMG 19005 / NCIMB 14063 / MR-1).